The sequence spans 337 residues: Putative 2-aminoethylphosphonate-binding periplasmic protein (337 aa).

The N-terminal stretch at methionine 1–alanine 21 is a signal peptide.

The protein belongs to the bacterial solute-binding protein 1 family.

It is found in the periplasm. In terms of biological role, probably part of the PhnSTUV complex (TC 3.A.1.11.5) involved in 2-aminoethylphosphonate import. The chain is Putative 2-aminoethylphosphonate-binding periplasmic protein (phnS) from Salmonella typhi.